Reading from the N-terminus, the 154-residue chain is MLGLRRSATTLFDISQSLLRNVTFHGLRVQGIRVGNAEVPNNKPLKTGLQEVYGIGRRKSHQVLCHLGITNKLARDLTGKELIDLREEVGQHQHGDELRRRVGSEIQRLVEVDCYRGSRHRHGLPCRGQRTSTNARTKKGKAVAIAGKKKAPRK.

The N-terminal 30 residues, 1–30 (MLGLRRSATTLFDISQSLLRNVTFHGLRVQ), are a transit peptide targeting the mitochondrion. Residues 121–154 (RHGLPCRGQRTSTNARTKKGKAVAIAGKKKAPRK) are disordered. Basic residues predominate over residues 136–154 (RTKKGKAVAIAGKKKAPRK).

The protein belongs to the universal ribosomal protein uS13 family. As to quaternary structure, part of the small ribosomal subunit.

It is found in the mitochondrion. In terms of biological role, located at the top of the head of the small subunit, it contacts several helices of the 18S rRNA. This chain is Small ribosomal subunit protein uS13m (RPS13), found in Arabidopsis thaliana (Mouse-ear cress).